Consider the following 360-residue polypeptide: MDLSATLNSLVSKGVSGQAPTRDEALAVLRSDDDDLLDVVAAAYRLRRRYFGRRVKLNFLVNLKSGLCPEDCSYCSQRLGSNTGILKYTWLKPEEAAATAGAGISGGARRVCLVASGRGPTDRDVDRVADTIGAIKTAHPDVEVCACLGLLSDGQAAQLRAAGADAYNHNLNTAGEKYADICTTHTYNDRVDTVQEARHAGLSPCSGIIAGMGESDEDLVDVAFALRELAPDSIPVNFLMPFEGTPLGAEWNLNPRQCLRILAMVRFVNPTAEVRLSGGREIHLGSMQPLALSVVNSIFLGDYLTSEGQEGHQDLKMIAEAGFTVEGLNTDAEAALAMGAGLERVALRQRGAGTDLPPNA.

One can recognise a Radical SAM core domain in the interval 53–280; the sequence is RRVKLNFLVN…TAEVRLSGGR (228 aa). Residues Cys-68, Cys-72, and Cys-75 each coordinate [4Fe-4S] cluster. 4 residues coordinate [2Fe-2S] cluster: Cys-112, Cys-145, Cys-205, and Arg-275.

Belongs to the radical SAM superfamily. Biotin synthase family. As to quaternary structure, homodimer. It depends on [4Fe-4S] cluster as a cofactor. Requires [2Fe-2S] cluster as cofactor.

It carries out the reaction (4R,5S)-dethiobiotin + (sulfur carrier)-SH + 2 reduced [2Fe-2S]-[ferredoxin] + 2 S-adenosyl-L-methionine = (sulfur carrier)-H + biotin + 2 5'-deoxyadenosine + 2 L-methionine + 2 oxidized [2Fe-2S]-[ferredoxin]. It functions in the pathway cofactor biosynthesis; biotin biosynthesis; biotin from 7,8-diaminononanoate: step 2/2. Catalyzes the conversion of dethiobiotin (DTB) to biotin by the insertion of a sulfur atom into dethiobiotin via a radical-based mechanism. The sequence is that of Biotin synthase 2 from Frankia casuarinae (strain DSM 45818 / CECT 9043 / HFP020203 / CcI3).